A 170-amino-acid polypeptide reads, in one-letter code: Nicotinamide-nucleotide adenylyltransferase (170 aa).

It belongs to the archaeal NMN adenylyltransferase family.

The protein localises to the cytoplasm. The enzyme catalyses beta-nicotinamide D-ribonucleotide + ATP + H(+) = diphosphate + NAD(+). The protein operates within cofactor biosynthesis; NAD(+) biosynthesis; NAD(+) from nicotinamide D-ribonucleotide: step 1/1. This chain is Nicotinamide-nucleotide adenylyltransferase, found in Methanothrix thermoacetophila (strain DSM 6194 / JCM 14653 / NBRC 101360 / PT) (Methanosaeta thermophila).